The chain runs to 245 residues: 14-3-3 protein theta (245 aa).

M1 bears the N-acetylmethionine mark. K3 carries the N6-acetyllysine modification. Residue K49 is modified to N6-acetyllysine; alternate. Residue K49 forms a Glycyl lysine isopeptide (Lys-Gly) (interchain with G-Cter in SUMO2); alternate linkage. K68 bears the N6-acetyllysine mark. Y82 bears the 3'-nitrotyrosine mark. Position 92 is a phosphoserine (S92). Position 104 is a 3'-nitrotyrosine (Y104). An N6-acetyllysine modification is found at K115. S232 carries the phosphoserine; by CK1 modification.

Belongs to the 14-3-3 family. In terms of assembly, homodimer. Interacts with CDK16. Interacts with RGS7 (phosphorylated form). Interacts with SSH1. Interacts with CDKN1B ('Thr-198' phosphorylated form); the interaction translocates CDKN1B to the cytoplasm. Interacts with GAB2. Interacts with the 'Ser-241' phosphorylated form of PDPK1. Interacts with the 'Thr-369' phosphorylated form of DAPK2. Interacts with PI4KB, TBC1D22A and TBC1D22B. Interacts with SLITRK1. Interacts with RIPOR2. Interacts with INAVA; the interaction increases upon PRR (pattern recognition receptor) stimulation and is required for cellular signaling pathway activation and cytokine secretion. Interacts with MARK2, MARK3 and MARK4. Interacts with MEFV.

It localises to the cytoplasm. Functionally, adapter protein implicated in the regulation of a large spectrum of both general and specialized signaling pathways. Binds to a large number of partners, usually by recognition of a phosphoserine or phosphothreonine motif. Binding generally results in the modulation of the activity of the binding partner. Negatively regulates the kinase activity of PDPK1. This chain is 14-3-3 protein theta (YWHAQ), found in Bos taurus (Bovine).